The following is a 636-amino-acid chain: uncharacterized protein (636 aa).

Positions 10–36 (CLACRRKKVKCNRQYPCTRCLKYGEAC) form a DNA-binding region, zn(2)-C6 fungal-type. The segment covering 556–580 (NSQSTSEFVSPISDTENGSSSQQVS) has biased composition (polar residues). The segment at 556-581 (NSQSTSEFVSPISDTENGSSSQQVSE) is disordered.

The protein resides in the cytoplasm. The protein localises to the nucleus. This is an uncharacterized protein from Schizosaccharomyces pombe (strain 972 / ATCC 24843) (Fission yeast).